Reading from the N-terminus, the 228-residue chain is Carboxy-S-adenosyl-L-methionine synthase (228 aa).

S-adenosyl-L-methionine-binding positions include Y30, 55 to 57 (GSS), 79 to 80 (DN), and 103 to 104 (DV).

The protein belongs to the class I-like SAM-binding methyltransferase superfamily. Cx-SAM synthase family.

It carries out the reaction prephenate + S-adenosyl-L-methionine = carboxy-S-adenosyl-L-methionine + 3-phenylpyruvate + H2O. Its function is as follows. Catalyzes the conversion of S-adenosyl-L-methionine (SAM) to carboxy-S-adenosyl-L-methionine (Cx-SAM). The chain is Carboxy-S-adenosyl-L-methionine synthase from Staphylococcus epidermidis (strain ATCC 35984 / DSM 28319 / BCRC 17069 / CCUG 31568 / BM 3577 / RP62A).